The sequence spans 119 residues: MPRVKRGVTARARHKKVLKLAKGYYGARSRTYRVAVQAVTKAGQYAYRDRRQKKRQFRQLWIARINAASRQNGLSYSRFINGLKKASIEIDRKILADIAVFDKVVFATLVEKAKEALTK.

This sequence belongs to the bacterial ribosomal protein bL20 family.

Functionally, binds directly to 23S ribosomal RNA and is necessary for the in vitro assembly process of the 50S ribosomal subunit. It is not involved in the protein synthesizing functions of that subunit. The chain is Large ribosomal subunit protein bL20 from Shewanella frigidimarina (strain NCIMB 400).